The following is an 841-amino-acid chain: MLGILNKMFDPTKRTLNRYEKIANDIDAIRGDYENLSDDALKHKTIEFKERLEKGATTDDLLVEAFAVVREASRRVTGMFPFKVQLMGGVALHDGNIAEMKTGEGKTLTSTLPVYLNALTGKGVHVVTVNEYLASRDAEQMGKIFEFLGLTVGLNLNSMSKDEKREAYAADITYSTNNELGFDYLRDNMVLYKEQMVQRPLHFAVIDEVDSILIDEARTPLIISGQAAKSTKLYVQANAFVRTLKAEKDYTYDIKTKAVQLTEEGMTKAEKAFGIDNLFDVKHVALNHHINQALKAHVAMQKDVDYVVEDGQVVIVDSFTGRLMKGRRYSEGLHQAIEAKEGLEIQNESMTLATITFQNYFRMYEKLAGMTGTAKTEEEEFRNIYNMQVVTIPTNRPVVRDDRPDLIYRTMEGKFKAVAEDVAQRYMTGQPVLVGTVAVETSELISKLLKNKGIPHQVLNAKNHEREAQIIEEAGQKGAVTIATNMAGRGTDIKLGEGVKELGGLAVVGTERHESRRIDNQLRGRSGRQGDPGITQFYLSMEDELMRRFGAERTMAMLDRFGMDDSTPIQSKMVSRAVESSQKRVEGNNFDSRKQLLQYDDVLRQQREVIYKQRFEVIDSENLREIVENMIKSSLERAIAAYTPREELPEEWKLDGLVDLINTTYLDEGALEKSDIFGKEPDEMLELIMDRIITKYNEKEEQFGKEQMREFEKVIVLRAVDSKWMDHIDAMDQLRQGIHLRAYAQTNPLREYQMEGFAMFEHMIESIEDEVAKFVMKAEIENNLEREEVVQGQTTAHQPQEGDDNKKAKKAPVRKVVDIGRNAPCHCGSGKKYKNCCGRTE.

ATP is bound by residues 79–80, Gln-85, 103–107, and Asp-492; these read MF and GEGKT. Positions 786–813 are disordered; it reads REEVVQGQTTAHQPQEGDDNKKAKKAPV. Zn(2+)-binding residues include Cys-825, Cys-827, Cys-836, and Cys-837.

The protein belongs to the SecA family. In terms of assembly, part of the essential Sec protein translocation apparatus which comprises SecA, SecYEG and auxiliary proteins SecDF. Other proteins may be involved. Monomer and many different homodimers can be isolated, some of which are not formed in the presence of a synthetic signal peptide. A single SecA monomer interacts with SecY in the channel. Only shows some colocalization with FloA or FloT membrane assemblies. Requires Zn(2+) as cofactor.

Its subcellular location is the cell membrane. It localises to the cytoplasm. It is found in the membrane raft. It carries out the reaction ATP + H2O + cellular proteinSide 1 = ADP + phosphate + cellular proteinSide 2.. Part of the Sec protein translocase complex. Interacts with the SecYEG preprotein conducting channel. Has a central role in coupling the hydrolysis of ATP to the transfer of proteins into and across the cell membrane, serving as an ATP-driven molecular motor driving the stepwise translocation of polypeptide chains across the membrane. The chain is Protein translocase subunit SecA from Bacillus subtilis (strain 168).